Reading from the N-terminus, the 160-residue chain is Epithelial membrane protein 1 (160 aa).

A helical transmembrane segment spans residues 1–21 (MLVLLAAIFVVHIATCVMLFV). Residues Asn35 and Asn43 are each glycosylated (N-linked (GlcNAc...) asparagine). Helical transmembrane passes span 67–87 (FMIL…FQLF), 95–115 (FFLS…GASI), and 137–157 (FILA…YLVL).

The protein belongs to the PMP-22/EMP/MP20 family. As to expression, most abundant in squamous epithelia.

It localises to the membrane. The polypeptide is Epithelial membrane protein 1 (EMP1) (Oryctolagus cuniculus (Rabbit)).